Consider the following 78-residue polypeptide: Small ribosomal subunit protein bS20 (78 aa).

Belongs to the bacterial ribosomal protein bS20 family.

In terms of biological role, binds directly to 16S ribosomal RNA. The protein is Small ribosomal subunit protein bS20 of Streptococcus thermophilus (strain ATCC BAA-491 / LMD-9).